The chain runs to 277 residues: Shikimate dehydrogenase (NADP(+)) (277 aa).

Residues 18–20 (SKS) and Thr-65 contribute to the shikimate site. The active-site Proton acceptor is Lys-69. Glu-81 serves as a coordination point for NADP(+). 2 residues coordinate shikimate: Asn-90 and Asp-106. NADP(+)-binding positions include 130–134 (GAGGA), 154–159 (NRTFSK), and Met-217. A shikimate-binding site is contributed by Tyr-219. Gly-241 is an NADP(+) binding site.

This sequence belongs to the shikimate dehydrogenase family. In terms of assembly, homodimer.

The enzyme catalyses shikimate + NADP(+) = 3-dehydroshikimate + NADPH + H(+). The protein operates within metabolic intermediate biosynthesis; chorismate biosynthesis; chorismate from D-erythrose 4-phosphate and phosphoenolpyruvate: step 4/7. Involved in the biosynthesis of the chorismate, which leads to the biosynthesis of aromatic amino acids. Catalyzes the reversible NADPH linked reduction of 3-dehydroshikimate (DHSA) to yield shikimate (SA). This Vibrio vulnificus (strain CMCP6) protein is Shikimate dehydrogenase (NADP(+)).